We begin with the raw amino-acid sequence, 384 residues long: Carbamoyl phosphate synthase small chain (384 aa).

Residues 1–189 (MSKSALLVLE…GLPEAKDDSE (189 aa)) form a CPSase region. Residues Ser47, Gly241, and Gly243 each contribute to the L-glutamine site. A Glutamine amidotransferase type-1 domain is found at 193-380 (HVVAYDFGAK…IELIKLSVNE (188 aa)). The active-site Nucleophile is the Cys269. L-glutamine-binding residues include Leu270, Gln273, Asn311, Gly313, and Phe314. Active-site residues include His353 and Glu355.

This sequence belongs to the CarA family. As to quaternary structure, composed of two chains; the small (or glutamine) chain promotes the hydrolysis of glutamine to ammonia, which is used by the large (or ammonia) chain to synthesize carbamoyl phosphate. Tetramer of heterodimers (alpha,beta)4.

It carries out the reaction hydrogencarbonate + L-glutamine + 2 ATP + H2O = carbamoyl phosphate + L-glutamate + 2 ADP + phosphate + 2 H(+). The catalysed reaction is L-glutamine + H2O = L-glutamate + NH4(+). It participates in amino-acid biosynthesis; L-arginine biosynthesis; carbamoyl phosphate from bicarbonate: step 1/1. The protein operates within pyrimidine metabolism; UMP biosynthesis via de novo pathway; (S)-dihydroorotate from bicarbonate: step 1/3. In terms of biological role, small subunit of the glutamine-dependent carbamoyl phosphate synthetase (CPSase). CPSase catalyzes the formation of carbamoyl phosphate from the ammonia moiety of glutamine, carbonate, and phosphate donated by ATP, constituting the first step of 2 biosynthetic pathways, one leading to arginine and/or urea and the other to pyrimidine nucleotides. The small subunit (glutamine amidotransferase) binds and cleaves glutamine to supply the large subunit with the substrate ammonia. The chain is Carbamoyl phosphate synthase small chain from Photobacterium profundum (strain SS9).